The primary structure comprises 186 residues: Ribosome-recycling factor (186 aa).

It belongs to the RRF family.

Its subcellular location is the cytoplasm. Responsible for the release of ribosomes from messenger RNA at the termination of protein biosynthesis. May increase the efficiency of translation by recycling ribosomes from one round of translation to another. The protein is Ribosome-recycling factor of Pediococcus pentosaceus (strain ATCC 25745 / CCUG 21536 / LMG 10740 / 183-1w).